Reading from the N-terminus, the 473-residue chain is ATP synthase subunit beta (473 aa).

Position 153 to 160 (153 to 160 (GGAGVGKT)) interacts with ATP.

Belongs to the ATPase alpha/beta chains family. As to quaternary structure, F-type ATPases have 2 components, CF(1) - the catalytic core - and CF(0) - the membrane proton channel. CF(1) has five subunits: alpha(3), beta(3), gamma(1), delta(1), epsilon(1). CF(0) has three main subunits: a(1), b(2) and c(9-12). The alpha and beta chains form an alternating ring which encloses part of the gamma chain. CF(1) is attached to CF(0) by a central stalk formed by the gamma and epsilon chains, while a peripheral stalk is formed by the delta and b chains.

It is found in the cell inner membrane. The catalysed reaction is ATP + H2O + 4 H(+)(in) = ADP + phosphate + 5 H(+)(out). Produces ATP from ADP in the presence of a proton gradient across the membrane. The catalytic sites are hosted primarily by the beta subunits. This chain is ATP synthase subunit beta, found in Rickettsia conorii (strain ATCC VR-613 / Malish 7).